Here is a 371-residue protein sequence, read N- to C-terminus: 4-hydroxy-3-methylbut-2-en-1-yl diphosphate synthase (flavodoxin) (371 aa).

Cysteine 272, cysteine 275, cysteine 307, and glutamate 314 together coordinate [4Fe-4S] cluster.

Belongs to the IspG family. [4Fe-4S] cluster is required as a cofactor.

The catalysed reaction is (2E)-4-hydroxy-3-methylbut-2-enyl diphosphate + oxidized [flavodoxin] + H2O + 2 H(+) = 2-C-methyl-D-erythritol 2,4-cyclic diphosphate + reduced [flavodoxin]. The protein operates within isoprenoid biosynthesis; isopentenyl diphosphate biosynthesis via DXP pathway; isopentenyl diphosphate from 1-deoxy-D-xylulose 5-phosphate: step 5/6. Functionally, converts 2C-methyl-D-erythritol 2,4-cyclodiphosphate (ME-2,4cPP) into 1-hydroxy-2-methyl-2-(E)-butenyl 4-diphosphate. The polypeptide is 4-hydroxy-3-methylbut-2-en-1-yl diphosphate synthase (flavodoxin) (Pseudomonas aeruginosa (strain LESB58)).